The primary structure comprises 477 residues: Lactate utilization protein B (477 aa).

2 4Fe-4S ferredoxin-type domains span residues 304–334 and 353–382; these read GTQF…GHSY and YDTY…LHDL. [4Fe-4S] cluster contacts are provided by C313, C316, C319, C323, C366, C369, and C373. Positions 443–463 are disordered; the sequence is GPKPLQAWTNSRDFPMPDDEN.

This sequence belongs to the LutB/YkgF family.

Its function is as follows. Is involved in L-lactate degradation and allows cells to grow with lactate as the sole carbon source. Has probably a role as an electron transporter during oxidation of L-lactate. The chain is Lactate utilization protein B from Macrococcus caseolyticus (strain JCSC5402) (Macrococcoides caseolyticum).